We begin with the raw amino-acid sequence, 151 residues long: Small ribosomal subunit protein uS15 (151 aa).

Belongs to the universal ribosomal protein uS15 family.

This is Small ribosomal subunit protein uS15 (RpS13) from Choristoneura parallela (Spotted fireworm moth).